A 207-amino-acid chain; its full sequence is MSTYLQSSEGKFIPATKRPDGTWRKARRVKDGYVPQEEVPLYESKGKQFVAQRQAGVPPGMCPLLAAESKKEREKQERTRAKKQEKESGRQPKAPAPGVLVMPPSTCPPPKVSQQQQQQQQQPSGSRDINSISKTLEDTLKLDAAQEVVDPAKQLKKLRKKIREIEQIESRIQAGEQKKLDKDQLDKVKKKSEILRQIKDLESTPRS.

2 disordered regions span residues 1-28 (MSTY…KARR) and 52-133 (QRQA…NSIS). A coiled-coil region spans residues 64–91 (LLAAESKKEREKQERTRAKKQEKESGRQ). The span at 68–90 (ESKKEREKQERTRAKKQEKESGR) shows a compositional bias: basic and acidic residues. Residues 123–133 (PSGSRDINSIS) show a composition bias toward polar residues. A coiled-coil region spans residues 152–184 (AKQLKKLRKKIREIEQIESRIQAGEQKKLDKDQ).

The protein belongs to the pym family. Interacts (via N-terminus) with mago and tsu/RBM8A; the interaction is direct. As to expression, expression detected in the ovary. In the oocyte expressed in the germarium, nurse cell and follicle cell.

The protein localises to the cytoplasm. It localises to the nucleus. Functionally, regulator of the exon junction complex (EJC), a multiprotein complex that associates immediately upstream of the exon-exon junction on mRNAs and serves as a positional landmark for the intron exon structure of genes and directs post-transcriptional processes in the cytoplasm such as mRNA export, nonsense-mediated mRNA decay (NMD) or translation. Acts as an EJC disassembly factor by disrupting mature EJC from spliced mRNAs. Required for normal localization of osk mRNA to the posterior pole of the developing oocyte. Does not interact with the small ribosomal unit or components of the translation initiation complex. May not function in cap-dependent translation regulation. This chain is Partner of Y14 and mago, found in Drosophila melanogaster (Fruit fly).